The chain runs to 140 residues: Large ribosomal subunit protein uL16 (140 aa).

The segment covering 1-14 (MLSPRRTKFRKQQR) has biased composition (basic residues). A disordered region spans residues 1-22 (MLSPRRTKFRKQQRGRMEGAAT).

Belongs to the universal ribosomal protein uL16 family. Part of the 50S ribosomal subunit.

Its function is as follows. Binds 23S rRNA and is also seen to make contacts with the A and possibly P site tRNAs. The protein is Large ribosomal subunit protein uL16 of Cyanothece sp. (strain PCC 7425 / ATCC 29141).